A 662-amino-acid chain; its full sequence is 72 kDa type IV collagenase (662 aa).

Positions 1–29 are cleaved as a signal peptide; sequence MEALGARGALAGFLRALCVLGCLLGRATA. Positions 30 to 109 are cleaved as a propeptide — activation peptide; that stretch reads PPSPVIKFPG…PRCGNPDVAN (80 aa). Positions 100-107 match the Cysteine switch motif; that stretch reads PRCGNPDV. Cys-102 contacts Zn(2+). Residues 110–221 form a collagenase-like 1 region; sequence YNFFPRKPKW…LWTLGEGQVV (112 aa). Ca(2+) is bound by residues Asp-134 and Asp-168. Zn(2+) is bound by residues His-178 and Asp-180. Ca(2+) is bound by residues Asp-185 and Gly-186. Residue His-193 coordinates Zn(2+). Ca(2+)-binding residues include Gly-200, Gly-202, and Asp-204. Residue His-206 participates in Zn(2+) binding. Ca(2+) contacts are provided by Asp-208, Asp-209, and Glu-211. A collagen-binding region spans residues 222-396; sequence RVKYGNADGE…WGFCPDQGYS (175 aa). 3 Fibronectin type-II domains span residues 228–276, 286–334, and 344–392; these read ADGE…FCPH, ADGQ…FCPE, and SEGA…FCPD. Intrachain disulfides connect Cys-233–Cys-259, Cys-247–Cys-274, Cys-291–Cys-317, Cys-305–Cys-332, Cys-349–Cys-375, and Cys-363–Cys-390. The interval 397-467 is collagenase-like 2; that stretch reads LFLVAAHEFG…GPTPTLGPVT (71 aa). His-403 provides a ligand contact to Zn(2+). Glu-404 is an active-site residue. The Zn(2+) site is built by His-407 and His-413. The interval 414–662 is required for inhibitor TIMP2 binding; sequence SQDPGALMAP…GSIKTDWLGC (249 aa). An intrachain disulfide couples Cys-471 to Cys-662. Hemopexin repeat units follow at residues 474-518, 519-565, 567-615, and 616-662; these read DIVF…WPEL, PEKI…GLPP, VQRV…WNAI, and PDHL…WLGC. Ca(2+) is bound by residues Asp-478, Asp-523, and Asp-571. N-linked (GlcNAc...) asparagine glycosylation occurs at Asn-575. Asp-620 contributes to the Ca(2+) binding site. N-linked (GlcNAc...) asparagine glycosylation occurs at Asn-644.

This sequence belongs to the peptidase M10A family. In terms of assembly, interacts (via the C-terminal hemopexin-like domains-containing region) with the integrin alpha-V/beta-3; the interaction promotes vascular invasion in angiogenic vessels and melamoma cells. Interacts (via the C-terminal PEX domain) with TIMP2 (via the C-terminal); the interaction inhibits the degradation activity. Interacts with GSK3B. Ca(2+) serves as cofactor. Requires Zn(2+) as cofactor. In terms of processing, phosphorylation on multiple sites modulates enzymatic activity. Phosphorylated by PKC in vitro. Post-translationally, the propeptide is processed by MMP14 (MT-MMP1) and MMP16 (MT-MMP3). Autocatalytic cleavage in the C-terminal produces the anti-angiogenic peptide, PEX. This processing appears to be facilitated by binding integrinv/beta3.

The protein resides in the secreted. Its subcellular location is the extracellular space. It localises to the extracellular matrix. It is found in the membrane. The protein localises to the nucleus. It carries out the reaction Cleavage of gelatin type I and collagen types IV, V, VII, X. Cleaves the collagen-like sequence Pro-Gln-Gly-|-Ile-Ala-Gly-Gln.. In terms of biological role, ubiquitinous metalloproteinase that is involved in diverse functions such as remodeling of the vasculature, angiogenesis, tissue repair, tumor invasion, inflammation, and atherosclerotic plaque rupture. As well as degrading extracellular matrix proteins, can also act on several nonmatrix proteins such as big endothelial 1 and beta-type CGRP promoting vasoconstriction. Also cleaves KISS at a Gly-|-Leu bond. Appears to have a role in myocardial cell death pathways. Contributes to myocardial oxidative stress by regulating the activity of GSK3beta. Cleaves GSK3beta in vitro. Involved in the formation of the fibrovascular tissues. Functionally, PEX, the C-terminal non-catalytic fragment of MMP2, possesses anti-angiogenic and anti-tumor properties and inhibits cell migration and cell adhesion to FGF2 and vitronectin. Ligand for integrin alpha-v/beta-3 on the surface of blood vessels. This chain is 72 kDa type IV collagenase (MMP2), found in Oryctolagus cuniculus (Rabbit).